A 275-amino-acid polypeptide reads, in one-letter code: Tryptophan synthase alpha chain (275 aa).

The active-site Proton acceptor is the Glu-51.

This sequence belongs to the TrpA family. As to quaternary structure, tetramer of two alpha and two beta chains.

The enzyme catalyses (1S,2R)-1-C-(indol-3-yl)glycerol 3-phosphate + L-serine = D-glyceraldehyde 3-phosphate + L-tryptophan + H2O. It participates in amino-acid biosynthesis; L-tryptophan biosynthesis; L-tryptophan from chorismate: step 5/5. The alpha subunit is responsible for the aldol cleavage of indoleglycerol phosphate to indole and glyceraldehyde 3-phosphate. The chain is Tryptophan synthase alpha chain from Caulobacter vibrioides (strain ATCC 19089 / CIP 103742 / CB 15) (Caulobacter crescentus).